Here is a 782-residue protein sequence, read N- to C-terminus: Nezukol synthase KSL3 (782 aa).

Mg(2+) contacts are provided by Asp-529, Asp-533, Asn-677, and Glu-685. The DDXXD motif motif lies at 529 to 533 (DDVFD).

This sequence belongs to the terpene synthase family. Mg(2+) is required as a cofactor. In terms of tissue distribution, highly expressed in leaves, and, at low levels, in stems, but barely in roots and flowers.

It catalyses the reaction (+)-copalyl diphosphate = miltiradiene + diphosphate. The catalysed reaction is (+)-copalyl diphosphate + H2O = nezukol + diphosphate. It functions in the pathway secondary metabolite biosynthesis; terpenoid biosynthesis. In terms of biological role, involved in the biosynthesis of ent-kaurene diterpenoids natural products such as oridonin, miltiradiene, eriocalyxin B and nezukol, known to exhibit antitumor, anti-inflammatory and antibacterial activities. Catalyzes the conversion of (+)-copalyl diphosphate ((+)-CPP) to nezukol and miltiradiene. The reaction mechanism proceeds via the ionization of the diphosphate group of (+)-CPP, followed by formation of an intermediary pimar-15-en-8-yl(+) carbocation and neutralization of the carbocation by water capture at C-8 to yield nezukol. Can interact with ent-copalyl diphosphate (ent-CPP) but seems unable to use it as substrate. This is Nezukol synthase KSL3 from Isodon rubescens (Rabdosia rubescens).